The sequence spans 324 residues: Glyoxylate/hydroxypyruvate reductase B (324 aa).

Catalysis depends on residues R237 and E266. H285 (proton donor) is an active-site residue.

It belongs to the D-isomer specific 2-hydroxyacid dehydrogenase family. GhrB subfamily. Homodimer.

It is found in the cytoplasm. The enzyme catalyses glycolate + NADP(+) = glyoxylate + NADPH + H(+). It catalyses the reaction (R)-glycerate + NAD(+) = 3-hydroxypyruvate + NADH + H(+). It carries out the reaction (R)-glycerate + NADP(+) = 3-hydroxypyruvate + NADPH + H(+). Functionally, catalyzes the NADPH-dependent reduction of glyoxylate and hydroxypyruvate into glycolate and glycerate, respectively. This Salmonella paratyphi B (strain ATCC BAA-1250 / SPB7) protein is Glyoxylate/hydroxypyruvate reductase B.